Reading from the N-terminus, the 64-residue chain is Small, acid-soluble spore protein D (64 aa).

It belongs to the alpha/beta-type SASP family.

SASP are bound to spore DNA. They are double-stranded DNA-binding proteins that cause DNA to change to an a-like conformation. They protect the DNA backbone from chemical and enzymatic cleavage and are thus involved in dormant spore's high resistance to UV light. The chain is Small, acid-soluble spore protein D (sspD) from Bacillus subtilis (strain 168).